Consider the following 406-residue polypeptide: Phosphatidylinositol 5-phosphate 4-kinase type-2 alpha (406 aa).

Ala-2 bears the N-acetylalanine mark. A Phosphothreonine modification is found at Thr-3. Ser-14 carries the phosphoserine modification. In terms of domain architecture, PIPK spans 33–405 (ASDPLLSVLM…RFLDFIGHIL (373 aa)). A required for interaction with PIP5K1A region spans residues 59–65 (VMLMPDD). Lys-89 and Lys-145 each carry N6-acetyllysine. The segment at 288–329 (QEEVECEENDGEEEGESDGTHPVGTPPDSPGNTLNSSPPLAP) is disordered. The segment covering 289–304 (EEVECEENDGEEEGES) has biased composition (acidic residues).

In terms of assembly, homodimer. Interacts with PIP4K2B; the interaction may regulate localization to the nucleus. Probably interacts with PIP5K1A; the interaction inhibits PIP5K1A kinase activity. Post-translationally, phosphorylated in tyrosines. Phosphorylation is induced by light and increases kinase activity. As to expression, expressed ubiquitously, with high levels in the brain. Present in most tissues, except notably skeletal muscle and small intestine.

It is found in the cell membrane. The protein resides in the nucleus. It localises to the lysosome. The protein localises to the cytoplasm. Its subcellular location is the photoreceptor inner segment. It is found in the cell projection. The protein resides in the cilium. It localises to the photoreceptor outer segment. The enzyme catalyses a 1,2-diacyl-sn-glycero-3-phospho-(1D-myo-inositol-5-phosphate) + ATP = a 1,2-diacyl-sn-glycero-3-phospho-(1D-myo-inositol-4,5-bisphosphate) + ADP + H(+). The catalysed reaction is 1,2-dihexadecanoyl-sn-glycero-3-phospho-(1D-myo-inositol-5-phosphate) + ATP = 1,2-dihexadecanoyl-sn-glycero-3-phospho-(1D-myo-inositol-4,5-bisphosphate) + ADP + H(+). It carries out the reaction 1,2-dihexadecanoyl-sn-glycero-3-phospho-(1D-myo-inositol-5-phosphate) + GTP = 1,2-dihexadecanoyl-sn-glycero-3-phospho-(1D-myo-inositol-4,5-bisphosphate) + GDP + H(+). In rod outer segments, activated by light. Inhibited by I-OMe tyrphostin AG-538 (I-OMe-AG-538), acting as an ATP-competitive inhibitor. Catalyzes the phosphorylation of phosphatidylinositol 5-phosphate (PtdIns5P) on the fourth hydroxyl of the myo-inositol ring, to form phosphatidylinositol 4,5-bisphosphate (PtdIns(4,5)P2). Has both ATP- and GTP-dependent kinase activities. May exert its function by regulating the levels of PtdIns5P, which functions in the cytosol by increasing AKT activity and in the nucleus signals through ING2. May regulate the pool of cytosolic PtdIns5P in response to the activation of tyrosine phosphorylation. Required for lysosome-peroxisome membrane contacts and intracellular cholesterol transport through modulating peroxisomal PtdIns(4,5)P2 level. In collaboration with PIP4K2B, has a role in mediating autophagy in times of nutrient stress. Required for autophagosome-lysosome fusion and the regulation of cellular lipid metabolism. May be involved in thrombopoiesis, and the terminal maturation of megakaryocytes and regulation of their size. Negatively regulates insulin signaling through a catalytic-independent mechanism. PIP4Ks interact with PIP5Ks and suppress PIP5K-mediated PtdIns(4,5)P2 synthesis and insulin-dependent conversion to PtdIns(3,4,5)P3. The chain is Phosphatidylinositol 5-phosphate 4-kinase type-2 alpha from Homo sapiens (Human).